Consider the following 116-residue polypeptide: Small ribosomal subunit protein uS13m (116 aa).

The interval 92 to 116 (HQDGSPLRGQRTHTNARTARKQIRK) is disordered.

This sequence belongs to the universal ribosomal protein uS13 family. As to quaternary structure, part of the small ribosomal subunit.

It localises to the mitochondrion. Located at the top of the head of the small subunit, it contacts several helices of the 18S rRNA. In Triticum aestivum (Wheat), this protein is Small ribosomal subunit protein uS13m (RPS13).